Consider the following 343-residue polypeptide: Phenylalanine--tRNA ligase alpha subunit (343 aa).

Glu264 is a binding site for Mg(2+).

It belongs to the class-II aminoacyl-tRNA synthetase family. Phe-tRNA synthetase alpha subunit type 1 subfamily. As to quaternary structure, tetramer of two alpha and two beta subunits. The cofactor is Mg(2+).

The protein localises to the cytoplasm. It carries out the reaction tRNA(Phe) + L-phenylalanine + ATP = L-phenylalanyl-tRNA(Phe) + AMP + diphosphate + H(+). The sequence is that of Phenylalanine--tRNA ligase alpha subunit from Aromatoleum aromaticum (strain DSM 19018 / LMG 30748 / EbN1) (Azoarcus sp. (strain EbN1)).